A 325-amino-acid chain; its full sequence is Hydroxylase/desaturase poxK (325 aa).

Over residues 1 to 12 the composition is skewed to low complexity; sequence MTATATPVPTVA. Positions 1-25 are disordered; it reads MTATATPVPTVASHAQDITLPPPPK.

Belongs to the asaB hydroxylase/desaturase family.

Its pathway is secondary metabolite biosynthesis. In terms of biological role, hydroxylase/desaturase; part of the gene cluster that mediates the biosynthesis of oxaleimides, cytotoxic compounds containing an unusual disubstituted succinimide moiety. The first step of the pathway is provided by the HR-PKS poxF that serves in a new mode of collaborative biosynthesis with the PKS-NRPS poxE, by providing the olefin containing amino acid substrate via the synthesis of an ACP-bound dec-4-enoate. The cytochrome P450 monooxygenase poxM-catalyzed oxidation at the alpha-position creates the enzyme-bound 2-hydroxydec-4-enoyl-ACP thioester, which may be prone to spontaneous hydrolysis to yield 2-hydroxydec-4-enoic acid due to increased electrophilicity of the carbonyl. 2-hydroxydec-4-enoic acid can then be further oxidized by poxM to yield the alpha-ketoacid 2-oxodec-4-enoicacid, which is reductively aminated by the aminotransferase poxL to yield (S,E)-2-aminodec-4-enoic acid. The Hybrid PKS-NRPS synthetase poxE then performs condensation between the octaketide product of its PKS modules and the amino group of (S,E)-2-aminodec-4-enoic acid which is activated and incorporated by the adenylation domain. The resulting aminoacyl product can be cyclized by the Diels-Alderase PoxQ and reductively released by the reductive (R) domain of poxE to yield an aldehyde intermediate. The released aldehyde is then substrate for a Knoevenagel condensation by the hydrolyase poxO followed by an oxidation at the 5-position of the pyrrolidone ring. The presence of the olefin from the amino acid building block allows for migration of the substituted allyl group to occur. This allylic transposition reaction takes place in a conjugate addition, semipinacol-like fashion to yield a succinimide intermediate. Iterative two-electron oxidations of the C7 methyl of the succinimide intermediate to the carboxylic acid can be catalyzed by one of two remaining cytochrome P450 monooxygenasess poxC or poxD to yield oxaleimide A. Subsequent oxidation yields the maleimide scaffold oxaleimide I. Both oxaleimide A and oxaleimide I can undergo oxidative modifications in the decalin ring to yield the series of products oxaleimides B to H. This Penicillium oxalicum protein is Hydroxylase/desaturase poxK.